Consider the following 498-residue polypeptide: MASQGTKRSYEQMETDGERQNATEIRASVGKMIDGIGRFYIQMCTELKLSDYEGRLIQNSLTVERMVLSAFDERRNRYLEEHPSAGKDPKKTGGPIYKRVGGRWMRELVLYDKEEIRRIWRQANNGDDATRGLTHMMIWHSNLNDTTYQRTRALVRTGMDPRMCSLMQGSTLPRRSGAAGAAVKGIGTMVMELIRMIKRGINDRNFWRGENGRKTRIAYERMCNILKGKFQTAAQRAMMDQVRESRNPGNAEIEDLIFSARSALILRGSVAHKSCLPACVYGPAVSSGYDFEKEGYSLVGIDPFKLLQNSQVYSLIRPNENPAHKSQLVWMACHSAAFEDLRLLSFIRGTKVSPRGKLSTRGVQIASNENMDNMESSTLELRSRYWAIRTRSGGNTNQQRASAGQISVQPTFSVQRNLPFEKSTVMAAFTGNTEGRTSDMRAEIIRMMEGAKPEEVSFRGRGVFELSDEKATNPIVPSFDMSNEGSYFFGDNAEEYDN.

Positions 1–18 (MASQGTKRSYEQMETDGE) match the Unconventional nuclear localization signal motif. The segment at 1–21 (MASQGTKRSYEQMETDGERQN) is disordered. Residues 8 to 21 (RSYEQMETDGERQN) are compositionally biased toward basic and acidic residues. The Bipartite nuclear localization signal signature appears at 198-216 (KRGINDRNFWRGENGRKTR).

The protein belongs to the influenza viruses nucleoprotein family. As to quaternary structure, homomultimerizes to form the nucleocapsid. May bind host exportin-1/XPO1. Binds to viral genomic RNA. Protein-RNA contacts are mediated by a combination of electrostatic interactions between positively charged residues and the phosphate backbone and planar interactions between aromatic side chains and bases. Post-translationally, late in virus-infected cells, may be cleaved from a 56-kDa protein to a 53-kDa protein by a cellular caspase. This cleavage might be a marker for the onset of apoptosis in infected cells or have a specific function in virus host interaction.

The protein localises to the virion. The protein resides in the host nucleus. Its function is as follows. Encapsidates the negative strand viral RNA, protecting it from nucleases. The encapsidated genomic RNA is termed the ribonucleoprotein (RNP) and serves as template for transcription and replication. The RNP needs to be localized in the host nucleus to start an infectious cycle, but is too large to diffuse through the nuclear pore complex. NP comprises at least 2 nuclear localization signals that are responsible for the active RNP import into the nucleus through cellular importin alpha/beta pathway. Later in the infection, nclear export of RNPs are mediated through viral proteins NEP interacting with M1 which binds nucleoproteins. It is possible that nucleoprotein binds directly host exportin-1/XPO1 and plays an active role in RNPs nuclear export. M1 interaction with RNP seems to hide nucleoprotein's nuclear localization signals. Soon after a virion infects a new cell, M1 dissociates from the RNP under acidification of the virion driven by M2 protein. Dissociation of M1 from RNP unmasks nucleoprotein's nuclear localization signals, targeting the RNP to the nucleus. The chain is Nucleoprotein from Aves (whales).